We begin with the raw amino-acid sequence, 1010 residues long: Trifunctional purine biosynthetic protein adenosine-3 (1010 aa).

Ala-2 is modified (N-acetylalanine). Ser-10 is subject to Phosphoserine. An ATP-grasp domain is found at 111-318; sequence KEFMDRHEIP…LYEVMQSTLD (208 aa). Residues 190 to 193, Glu-197, Arg-220, and Asn-229 each bind ATP; that span reads EEFL. Mg(2+) is bound by residues Glu-288 and Asn-290. N6-acetyllysine is present on Lys-350. The interval 434 to 809 is AIRS domain; the sequence is GLTYKDSGVD…NFPVQQKKAR (376 aa). 2 positions are modified to phosphoserine: Ser-440 and Ser-467. Position 682 is a phosphothreonine (Thr-682). Residues 810–1010 form a GART domain region; sequence VAVLISGTGS…DGKIHWAKEQ (201 aa). N(1)-(5-phospho-beta-D-ribosyl)glycinamide is bound at residue 818–820; the sequence is GSN. Residues Arg-871, 896–899, and Asn-913 contribute to the (6R)-10-formyltetrahydrofolate site; that span reads MRIL. Residue His-915 is the Proton donor of the active site. (6R)-10-formyltetrahydrofolate is bound at residue 947 to 951; sequence AEDVD. 977–980 lines the N(1)-(5-phospho-beta-D-ribosyl)glycinamide pocket; sequence KVAE.

In the N-terminal section; belongs to the GARS family. The protein in the central section; belongs to the AIR synthase family. It in the C-terminal section; belongs to the GART family. In terms of assembly, homodimer. The cofactor is Mg(2+). Mn(2+) serves as cofactor. As to expression, detected in liver, kidney and brain.

The enzyme catalyses 5-phospho-beta-D-ribosylamine + glycine + ATP = N(1)-(5-phospho-beta-D-ribosyl)glycinamide + ADP + phosphate + H(+). It catalyses the reaction 2-formamido-N(1)-(5-O-phospho-beta-D-ribosyl)acetamidine + ATP = 5-amino-1-(5-phospho-beta-D-ribosyl)imidazole + ADP + phosphate + H(+). It carries out the reaction N(1)-(5-phospho-beta-D-ribosyl)glycinamide + (6R)-10-formyltetrahydrofolate = N(2)-formyl-N(1)-(5-phospho-beta-D-ribosyl)glycinamide + (6S)-5,6,7,8-tetrahydrofolate + H(+). It functions in the pathway purine metabolism; IMP biosynthesis via de novo pathway; 5-amino-1-(5-phospho-D-ribosyl)imidazole from N(2)-formyl-N(1)-(5-phospho-D-ribosyl)glycinamide: step 2/2. It participates in purine metabolism; IMP biosynthesis via de novo pathway; N(1)-(5-phospho-D-ribosyl)glycinamide from 5-phospho-alpha-D-ribose 1-diphosphate: step 2/2. Its pathway is purine metabolism; IMP biosynthesis via de novo pathway; N(2)-formyl-N(1)-(5-phospho-D-ribosyl)glycinamide from N(1)-(5-phospho-D-ribosyl)glycinamide (10-formyl THF route): step 1/1. Functionally, trifunctional enzyme that catalyzes three distinct reactions as part of the 'de novo' inosine monophosphate biosynthetic pathway. This Mus musculus (Mouse) protein is Trifunctional purine biosynthetic protein adenosine-3 (Gart).